We begin with the raw amino-acid sequence, 374 residues long: 1,3,6,8-tetrahydroxynaphthalene synthase (374 aa).

Cys138 is an active-site residue.

Belongs to the thiolase-like superfamily. Chalcone/stilbene synthases family. In terms of assembly, homodimer.

It catalyses the reaction 5 malonyl-CoA + 5 H(+) = naphthalene-1,3,6,8-tetrol + 5 CO2 + 5 CoA + H2O. It functions in the pathway pigment biosynthesis; melanin biosynthesis. Its function is as follows. Involved in the biosynthesis of melanin but also various secondary metabolites containing a naphthoquinone ring. Catalyzes the iterative condensation of five CoA-linked malonyl units to form a pentaketide intermediate. THNS subsequently catalyzes the dual intramolecular Claisen and aldol condensations of this linear intermediate to produce the fused ring of 1,3,6,8-tetrahydroxynaphthalene (THN). This Streptomyces coelicolor (strain ATCC BAA-471 / A3(2) / M145) protein is 1,3,6,8-tetrahydroxynaphthalene synthase.